The sequence spans 269 residues: Probable membrane transporter protein YfcA (269 aa).

The Periplasmic segment spans residues 1-7 (METFNSL). Residues 8–28 (FMVSPLLLGVLFFVAMLAGFI) form a helical membrane-spanning segment. The Cytoplasmic segment spans residues 29–30 (DS). The chain crosses the membrane as a helical span at residues 31-51 (IAGGGGLLTIPALMAAGMSPA). At 52 to 84 (NALATNKLQACGGSISATIYFIRRKVVSLSDQK) the chain is on the periplasmic side. Residues 85–105 (LNIAMTFVGSMSGALLVQYVQ) traverse the membrane as a helical segment. Residues 106–111 (ADVLRQ) lie on the Cytoplasmic side of the membrane. The helical transmembrane segment at 112-132 (ILPILVICIGLYFLLMPKLGE) threads the bilayer. Residues 133 to 156 (EDRQRRMYGLPFALIAGGCVGFYD) are Periplasmic-facing. The chain crosses the membrane as a helical span at residues 157–177 (GFFGPAAGSFYALAFVTLCGF). Residues 178-197 (NLAKATAHAKLLNATSNIGG) lie on the Cytoplasmic side of the membrane. A helical transmembrane segment spans residues 198–218 (LLLFILGGKVIWATGFVMLVG). At 219–269 (QFLGARMGSRLVLSKGQKLIRPMIVIVSAVMSAKLLYDSHGQEILHWLGMN) the chain is on the periplasmic side.

The protein belongs to the 4-toluene sulfonate uptake permease (TSUP) (TC 2.A.102) family.

The protein localises to the cell inner membrane. The polypeptide is Probable membrane transporter protein YfcA (yfcA) (Escherichia coli O157:H7).